A 451-amino-acid chain; its full sequence is MATPLVAGPAALRFAAAASWQVVRGRCVEHFPRVLEFLRSLRAVAPGLVRYRHHERLCMGLKAKVVVELILQGRPWAQVLKALNHHFPESGPIVRDPKATKQDLRKILEAQETFYQQVKQLSEAPVDLASKLQELEQEYGEPFLAAMEKLLFEYLCQLEKALPTPQAQQLQDVLSWMQPGVSITSSLAWRQYGVDMGWLLPECSVTDSVNLAEPMEQNPPQQQRLALHNPLPKAKPGTHLPQGPSSRTHPEPLAGRHFNLAPLGRRRVQSQWASTRGGHKERPTVMLFPFRNLGSPTQVISKPESKEEHAIYTADLAMGTRAASTGKSKSPCQTLGGRALKENPVDLPATEQKENCLDCYMDPLRLSLLPPRARKPVCPPSLCSSVITIGDLVLDSDEEENGQGEGKESLENYQKTKFDTLIPTLCEYLPPSGHGAIPVSSCDCRDSSRPL.

At A2 the chain carries N-acetylalanine. The tract at residues 229–257 (NPLPKAKPGTHLPQGPSSRTHPEPLAGRH) is disordered. Residues 256-278 (RHFNLAPLGRRRVQSQWASTRGG) carry the TBM motif. The Nuclear localization signal motif lies at 262–268 (PLGRRRV). Residue S295 is modified to Phosphoserine. Residues K302, K306, K341, and K353 each participate in a glycyl lysine isopeptide (Lys-Gly) (interchain with G-Cter in SUMO2) cross-link.

As to quaternary structure, monomer. Found in a complex with POT1; TERF1 and TNKS1. Component of the shelterin complex (telosome) composed of TERF1, TERF2, TINF2, TERF2IP ACD and POT1. Interacts with TERF1, TERF2 and ACD. As to expression, detected in heart, brain, placenta, lung, liver, skeletal muscle, kidney and pancreas.

It is found in the nucleus. It localises to the chromosome. Its subcellular location is the telomere. The protein localises to the nucleus matrix. In terms of biological role, component of the shelterin complex (telosome) that is involved in the regulation of telomere length and protection. Shelterin associates with arrays of double-stranded TTAGGG repeats added by telomerase and protects chromosome ends; without its protective activity, telomeres are no longer hidden from the DNA damage surveillance and chromosome ends are inappropriately processed by DNA repair pathways. Plays a role in shelterin complex assembly. Isoform 1 may have additional role in tethering telomeres to the nuclear matrix. The sequence is that of TERF1-interacting nuclear factor 2 (TINF2) from Homo sapiens (Human).